The following is a 341-amino-acid chain: Elongation factor Ts, mitochondrial 2 (341 aa).

Residues 1–17 (MLAARFASRAFPRTRLY) constitute a mitochondrion transit peptide.

This sequence belongs to the EF-Ts family.

It localises to the mitochondrion. Associates with the EF-Tu.GDP complex and induces the exchange of GDP to GTP. It remains bound to the aminoacyl-tRNA.EF-Tu.GTP complex up to the GTP hydrolysis stage on the ribosome. In Postia placenta (strain ATCC 44394 / Madison 698-R) (Brown rot fungus), this protein is Elongation factor Ts, mitochondrial 2.